We begin with the raw amino-acid sequence, 693 residues long: Transforming growth factor beta activator LRRC33 (693 aa).

The N-terminal stretch at 1 to 19 (MEFPPLWLCLGFHFLIVEW) is a signal peptide. Residues 20 to 651 (RSGPGTATAA…CKWEQVDTGL (632 aa)) lie on the Extracellular side of the membrane. An LRRNT domain is found at 29 to 56 (ASQGGCKVVDGVADCRGLNLASVPSSLP). LRR repeat units follow at residues 58–79 (HSRM…SLQA), 82–103 (RLEN…AFRE), 106–127 (HLRN…SAAA), 133–155 (GLRR…MLQN), 158–179 (SLEV…IFEG), 182–203 (HLVE…AFDG), 206–227 (ELRR…SLTQ), 228–239 (LRFLNVSYNILE), 251–272 (ELEI…PQCG), and 273–294 (KLHT…YNTS). Residues N74 and N85 are each glycosylated (N-linked (GlcNAc...) asparagine). The N-linked (GlcNAc...) asparagine glycan is linked to N155. The N-linked (GlcNAc...) asparagine glycan is linked to N232. N292, N309, and N312 each carry an N-linked (GlcNAc...) asparagine glycan. 11 LRR repeats span residues 329 to 350 (ALRF…FLKK), 353 to 374 (SLSH…EHEP), 377 to 398 (ALTE…PGLT), 403 to 424 (NLRV…LFDN), 427 to 448 (SITT…VPVD), 463 to 484 (SLRS…PFQG), 486 to 507 (SLTH…SPLW), 512 to 533 (TLQV…MDFS), 537 to 558 (NLRA…KGSL), 559 to 580 (ALRT…VVSE), and 585 to 605 (GLQT…EGWG). N408 and N424 each carry an N-linked (GlcNAc...) asparagine glycan. N-linked (GlcNAc...) asparagine glycosylation occurs at N500. An LRRCT domain is found at 606–644 (ALQQHFKTVADLSMVTCNLSSKIVRVVELPEGLPQGCKW). N623 carries N-linked (GlcNAc...) asparagine glycosylation. Residues 652-672 (FYLVLILPSCLTLLVACTVVF) form a helical membrane-spanning segment. Residues 673-693 (LTFKKPLLQVIKSRCHWSSIY) are Cytoplasmic-facing.

This sequence belongs to the LRRC32/LRRC33 family. Interacts with TGFB1; associates via disulfide bonds with the Latency-associated peptide chain (LAP) regulatory chain of TGFB1, leading to regulate activation of TGF-beta-1. Interacts (via LRR repeats) with TLR2, TLR3, TLR4, TLR9 and probably other Toll-like receptors. Interacts with CYBB/NOX2; the interaction is direct. N-glycosylated. Mainly expressed in cells of hematopoietic origin, such as in immune organs such as lymph nodes, thymus and spleen. Among leukocytes, expressed at higher level in myeloid cell such as macrophages, neutrophils and dendritic cells. Highly expressed in central nervous system-resident macrophages, including microglia and perivascular macrophages.

It localises to the cell membrane. It is found in the endoplasmic reticulum membrane. In terms of biological role, key regulator of transforming growth factor beta-1 (TGFB1) specifically required for microglia function in the nervous system. Required for activation of latent TGF-beta-1 in macrophages and microglia: associates specifically via disulfide bonds with the Latency-associated peptide (LAP), which is the regulatory chain of TGFB1, and regulates integrin-dependent activation of TGF-beta-1. TGF-beta-1 activation mediated by LRRC33/NRROS is highly localized: there is little spreading of TGF-beta-1 activated from one microglial cell to neighboring microglia, suggesting the existence of localized and selective activation of TGF-beta-1 by LRRC33/NRROS. Indirectly plays a role in Toll-like receptor (TLR) signaling: ability to inhibit TLR-mediated NF-kappa-B activation and cytokine production is probably a consequence of its role in TGF-beta-1 signaling. The chain is Transforming growth factor beta activator LRRC33 from Mus musculus (Mouse).